A 328-amino-acid chain; its full sequence is Formimidoylglutamase (328 aa).

Residues H133, D159, H161, D163, D253, and D255 each coordinate Mn(2+).

It belongs to the arginase family. It depends on Mn(2+) as a cofactor.

The enzyme catalyses N-formimidoyl-L-glutamate + H2O = formamide + L-glutamate. The protein operates within amino-acid degradation; L-histidine degradation into L-glutamate; L-glutamate from N-formimidoyl-L-glutamate (hydrolase route): step 1/1. Its function is as follows. Catalyzes the conversion of N-formimidoyl-L-glutamate to L-glutamate and formamide. This chain is Formimidoylglutamase, found in Streptococcus pyogenes serotype M5 (strain Manfredo).